The following is a 303-amino-acid chain: MNKMNNIFLIISSIILSIVIFVSGECAIDFSSEISVGISDSQWSCLASNNQRVIIQVWSGGGQYNSNISSVVSAAEQAGFDNIDLYAFLCSECDGNYPASSAIQSLVSSLKSDGINFNMLWIDVEQCDGCWGAESDNADYVQEAVETAQGLGVLVGVYSSEGEWPQTVGNLSTLSQYPLWYAHYDDNPSFSDTAFYEFGGWTSPAMKQYIGNTNQCGVSVDLDFYGSGSGCSTSSGSASGSASGSASGSASGSNSGSSNSGSSNSGSSNSGSNSGSSNSGSGNSGSSNSGSASGSGTGSGSSI.

An N-terminal signal peptide occupies residues 1–24 (MNKMNNIFLIISSIILSIVIFVSG). In terms of domain architecture, Ch-type lysozyme spans 28–240 (IDFSSEISVG…CSTSSGSASG (213 aa)). Asn-67 is a glycosylation site (N-linked (GlcNAc...) asparagine). The active site involves Glu-125. Asn-170 carries an N-linked (GlcNAc...) asparagine glycan. The S-G-S motif repeats stretch occupies residues 226–303 (GSGSGCSTSS…GSGTGSGSSI (78 aa)). Residues 236–292 (GSASGSASGSASGSASGSNSGSSNSGSSNSGSSNSGSNSGSSNSGSGNSGSSNSGSA) show a composition bias toward low complexity. Positions 236–303 (GSASGSASGS…GSGTGSGSSI (68 aa)) are disordered. Gly residues predominate over residues 293–303 (SGSGTGSGSSI).

It belongs to the glycosyl hydrolase 25 family. Monomer. Component of the counting factor (CF) complex, which includes cf60, cf50, cf45-1 and ctnA.

It localises to the secreted. The catalysed reaction is Hydrolysis of (1-&gt;4)-beta-linkages between N-acetylmuramic acid and N-acetyl-D-glucosamine residues in a peptidoglycan and between N-acetyl-D-glucosamine residues in chitodextrins.. Cell-counting factor that limits the maximum size of the multicellular structure during aggregation. Has a very low lysozyme activity. The chain is Counting factor 50 (cf50-1) from Dictyostelium discoideum (Social amoeba).